The primary structure comprises 515 residues: 1-pyrroline-5-carboxylate dehydrogenase (515 aa).

Residues glutamate 286 and cysteine 320 contribute to the active site.

This sequence belongs to the aldehyde dehydrogenase family. RocA subfamily.

It carries out the reaction L-glutamate 5-semialdehyde + NAD(+) + H2O = L-glutamate + NADH + 2 H(+). It functions in the pathway amino-acid degradation; L-proline degradation into L-glutamate; L-glutamate from L-proline: step 2/2. This chain is 1-pyrroline-5-carboxylate dehydrogenase, found in Geobacillus sp. (strain WCH70).